The primary structure comprises 221 residues: Mediator of RNA polymerase II transcription subunit 19a (221 aa).

Residues 101–221 (PVELPPAEKG…DEVGAIRVAG (121 aa)) are disordered. Basic residues predominate over residues 142–152 (EHKKHKHKHKD). Over residues 153 to 178 (RSKDKDKDKDRDRKKDKNGHHDSGDH) the composition is skewed to basic and acidic residues. A compositionally biased stretch (basic residues) spans 179–188 (SKKHHDKKRK).

Belongs to the plant Mediator complex subunit 19 family. Component of the Mediator complex. Interacts with FIB2.

Its subcellular location is the nucleus. Component of the Mediator complex, a coactivator involved in the regulated transcription of nearly all RNA polymerase II-dependent genes. Mediator functions as a bridge to convey information from gene-specific regulatory proteins to the basal RNA polymerase II transcription machinery. The Mediator complex, having a compact conformation in its free form, is recruited to promoters by direct interactions with regulatory proteins and serves for the assembly of a functional preinitiation complex with RNA polymerase II and the general transcription factors. The polypeptide is Mediator of RNA polymerase II transcription subunit 19a (MED19A) (Arabidopsis thaliana (Mouse-ear cress)).